A 718-amino-acid polypeptide reads, in one-letter code: Catalase (718 aa).

Residues histidine 103 and asparagine 176 contribute to the active site. Heme is bound at residue tyrosine 390.

The protein belongs to the catalase family. The cofactor is heme.

The protein resides in the peroxisome matrix. The enzyme catalyses 2 H2O2 = O2 + 2 H2O. Functionally, catalyzes the degradation of hydrogen peroxide (H(2)O(2)) generated by peroxisomal oxidases to water and oxygen, thereby protecting cells from the toxic effects of hydrogen peroxide. This Blumeria hordei (Barley powdery mildew) protein is Catalase (CAT1).